A 61-amino-acid polypeptide reads, in one-letter code: Probradykinin-1 (61 aa).

The signal sequence occupies residues M1 to C22. Residues E23–F48 constitute a propeptide that is removed on maturation. Residues E24–T61 form a disordered region. Positions E30–S42 are enriched in acidic residues.

Belongs to the frog skin active peptide (FSAP) family. Bradykinin-related peptide subfamily. In terms of tissue distribution, expressed by the skin glands.

The protein resides in the secreted. Functionally, may produce in vitro relaxation of rat arterial smooth muscle and constriction of intestinal smooth muscle. May target bradykinin receptors (BDKRB). In Pithecopus azureus (Orange-legged monkey tree frog), this protein is Probradykinin-1.